Here is a 228-residue protein sequence, read N- to C-terminus: Ribose-5-phosphate isomerase A (228 aa).

Substrate-binding positions include 27–30 (TGTT), 86–89 (DGAD), and 100–103 (KGMG). Glu-109 serves as the catalytic Proton acceptor. Lys-127 lines the substrate pocket.

It belongs to the ribose 5-phosphate isomerase family. Homodimer.

It carries out the reaction aldehydo-D-ribose 5-phosphate = D-ribulose 5-phosphate. It functions in the pathway carbohydrate degradation; pentose phosphate pathway; D-ribose 5-phosphate from D-ribulose 5-phosphate (non-oxidative stage): step 1/1. Catalyzes the reversible conversion of ribose-5-phosphate to ribulose 5-phosphate. This Borreliella burgdorferi (strain ZS7) (Borrelia burgdorferi) protein is Ribose-5-phosphate isomerase A.